The sequence spans 383 residues: Chitinase-3-like protein 1 (383 aa).

The signal sequence occupies residues 1–21 (MGLRASGTGFVVLVLLQSCAA). The 362-residue stretch at 22–383 (YKLICYYTSW…SAVKDVLAEV (362 aa)) folds into the GH18 domain. An intrachain disulfide couples Cys-26 to Cys-51. Asn-60 carries an N-linked (GlcNAc...) asparagine glycan. Chitin is bound by residues 70–71 (EW), 97–100 (GGWN), Tyr-141, 204–207 (LTYD), and Arg-263. A disulfide bridge links Cys-300 with Cys-364. The segment at 324-338 (QWVAYDDQESVKNKA) is important for AKT1 activation and IL8 production. Trp-352 contributes to the chitin binding site. A glycan (N-linked (GlcNAc...) asparagine) is linked at Asn-367.

Belongs to the glycosyl hydrolase 18 family. In terms of assembly, monomer.

Its subcellular location is the secreted. It is found in the extracellular space. It localises to the cytoplasm. The protein localises to the perinuclear region. The protein resides in the endoplasmic reticulum. Carbohydrate-binding lectin with a preference for chitin. Has no chitinase activity. May play a role in tissue remodeling and in the capacity of cells to respond to and cope with changes in their environment. Plays a role in T-helper cell type 2 (Th2) inflammatory response and IL-13-induced inflammation, regulating allergen sensitization, inflammatory cell apoptosis, dendritic cell accumulation and M2 macrophage differentiation. Facilitates invasion of pathogenic enteric bacteria into colonic mucosa and lymphoid organs. Mediates activation of AKT1 signaling pathway and subsequent IL8 production in colonic epithelial cells. Regulates antibacterial responses in lung by contributing to macrophage bacterial killing, controlling bacterial dissemination and augmenting host tolerance. Also regulates hyperoxia-induced injury, inflammation and epithelial apoptosis in lung. The protein is Chitinase-3-like protein 1 (CHI3L1) of Capra hircus (Goat).